The chain runs to 601 residues: Aspartate--tRNA(Asp/Asn) ligase (601 aa).

Residue Glu-174 participates in L-aspartate binding. The tract at residues 198 to 201 is aspartate; it reads QLFK. Arg-220 is a binding site for L-aspartate. ATP is bound by residues 220–222 and Gln-229; that span reads RDE. His-459 contributes to the L-aspartate binding site. Glu-493 contacts ATP. Arg-500 contacts L-aspartate. Residue 545 to 548 participates in ATP binding; the sequence is GLDR.

Belongs to the class-II aminoacyl-tRNA synthetase family. Type 1 subfamily. In terms of assembly, homodimer.

Its subcellular location is the cytoplasm. The catalysed reaction is tRNA(Asx) + L-aspartate + ATP = L-aspartyl-tRNA(Asx) + AMP + diphosphate. Its function is as follows. Aspartyl-tRNA synthetase with relaxed tRNA specificity since it is able to aspartylate not only its cognate tRNA(Asp) but also tRNA(Asn). Reaction proceeds in two steps: L-aspartate is first activated by ATP to form Asp-AMP and then transferred to the acceptor end of tRNA(Asp/Asn). This is Aspartate--tRNA(Asp/Asn) ligase from Variovorax paradoxus (strain S110).